A 149-amino-acid chain; its full sequence is Inner membrane protein YdcZ (149 aa).

Residues 1 to 4 (MNQS) are Periplasmic-facing. Residues 5-25 (LTLAFLIAAGIGLVVQNTLMV) form a helical membrane-spanning segment. Topologically, residues 26-33 (RITQTSST) are cytoplasmic. A helical transmembrane segment spans residues 34–54 (ILIAMLLNSLVGIVLFVSILW). Topologically, residues 55–70 (FKQGMAGFGELVSSVR) are periplasmic. A helical transmembrane segment spans residues 71–91 (WWTLIPGLLGSFFVFASISGY). Residues 92-93 (QN) are Cytoplasmic-facing. The chain crosses the membrane as a helical span at residues 94-114 (VGAATTIAVLVASQLIGGLML). The Periplasmic segment spans residues 115-123 (DIFRSHGVP). A helical transmembrane segment spans residues 124–144 (LRALFGPICGAILLVVGAWLV). The Cytoplasmic portion of the chain corresponds to 145-149 (ARRSF).

Its subcellular location is the cell inner membrane. The polypeptide is Inner membrane protein YdcZ (ydcZ) (Escherichia coli (strain K12)).